We begin with the raw amino-acid sequence, 178 residues long: Ribosome rescue factor SmrB (178 aa).

Positions 99 to 174 (LDLHGLTQMQ…GNAALLILIE (76 aa)) constitute a Smr domain.

This sequence belongs to the SmrB family. Associates with collided ribosomes, but not with correctly translating polysomes.

Its function is as follows. Acts as a ribosome collision sensor. Detects stalled/collided disomes (pairs of ribosomes where the leading ribosome is stalled and a second ribosome has collided with it) and endonucleolytically cleaves mRNA at the 5' boundary of the stalled ribosome. Stalled/collided disomes form a new interface (primarily via the 30S subunits) that binds SmrB. Cleaved mRNA becomes available for tmRNA ligation, leading to ribosomal subunit dissociation and rescue of stalled ribosomes. The sequence is that of Ribosome rescue factor SmrB from Photorhabdus laumondii subsp. laumondii (strain DSM 15139 / CIP 105565 / TT01) (Photorhabdus luminescens subsp. laumondii).